Reading from the N-terminus, the 338-residue chain is Transcription factor GRA2 (338 aa).

2 disordered regions span residues Cys171–Ala230 and Thr256–Ser277. The segment covering Ser174 to Gly203 has biased composition (polar residues). The basic motif stretch occupies residues Lys223 to Arg236. The bHLH domain maps to Lys223–Leu303. The tract at residues Ala237–Leu303 is helix-loop-helix motif.

The protein localises to the nucleus. In terms of biological role, transcription factor that specifically regulates the expression of the gene cluster that mediates the biosynthesis of gramillins A and B, bicyclic lipopeptides that induce cell death in maize leaves but not in wheat leaves. The chain is Transcription factor GRA2 (GRA2) from Gibberella zeae (strain ATCC MYA-4620 / CBS 123657 / FGSC 9075 / NRRL 31084 / PH-1) (Wheat head blight fungus).